We begin with the raw amino-acid sequence, 449 residues long: Phosphoglucosamine mutase (449 aa).

The active-site Phosphoserine intermediate is serine 101. 4 residues coordinate Mg(2+): serine 101, aspartate 242, aspartate 244, and aspartate 246. At serine 101 the chain carries Phosphoserine.

Belongs to the phosphohexose mutase family. Mg(2+) serves as cofactor. Post-translationally, activated by phosphorylation.

It catalyses the reaction alpha-D-glucosamine 1-phosphate = D-glucosamine 6-phosphate. In terms of biological role, catalyzes the conversion of glucosamine-6-phosphate to glucosamine-1-phosphate. The protein is Phosphoglucosamine mutase of Hyphomonas neptunium (strain ATCC 15444).